The chain runs to 501 residues: Acetylcholine receptor subunit beta (501 aa).

The signal sequence occupies residues 1–23 (MALGALLLLLGVLGTPLAPGARG). The Extracellular segment spans residues 24-244 (SEAEGQLIKK…VIFYLIIRRK (221 aa)). A disulfide bond links cysteine 151 and cysteine 165. N-linked (GlcNAc...) asparagine glycosylation occurs at asparagine 164. The next 3 helical transmembrane spans lie at 245–269 (PLFY…VFYL), 277–295 (MGLS…LLLA), and 311–332 (YLMF…VLNL). Topologically, residues 333 to 469 (HHRSPHTHQM…WQFVAMVVDR (137 aa)) are cytoplasmic. A disordered region spans residues 362–382 (RPKPERDQLPEPHHSLSPRSG). Residues 363–375 (PKPERDQLPEPHH) are compositionally biased toward basic and acidic residues. A Phosphotyrosine; by Tyr-kinases modification is found at tyrosine 390. Residues 470–488 (LFLWTFIVFTSVGTLVIFL) traverse the membrane as a helical segment.

The protein belongs to the ligand-gated ion channel (TC 1.A.9) family. Acetylcholine receptor (TC 1.A.9.1) subfamily. Beta-1/CHRNB1 sub-subfamily. As to quaternary structure, pentamer of two alpha chains, and one each of the beta, delta, and gamma (in immature muscle) or epsilon (in mature muscle) chains. The muscle heteropentamer composed of alpha-1, beta-1, delta, epsilon subunits interacts with the alpha-conotoxin ImII.

The protein localises to the postsynaptic cell membrane. It localises to the cell membrane. It catalyses the reaction K(+)(in) = K(+)(out). The catalysed reaction is Na(+)(in) = Na(+)(out). Its function is as follows. After binding acetylcholine, the AChR responds by an extensive change in conformation that affects all subunits and leads to opening of an ion-conducting channel across the plasma membrane. This chain is Acetylcholine receptor subunit beta (Chrnb1), found in Mus musculus (Mouse).